The sequence spans 231 residues: 7-cyano-7-deazaguanine synthase (231 aa).

An ATP-binding site is contributed by 17 to 27 (FSGGMDSFTLL). 4 residues coordinate Zn(2+): Cys193, Cys201, Cys204, and Cys207.

This sequence belongs to the QueC family. Zn(2+) serves as cofactor.

It catalyses the reaction 7-carboxy-7-deazaguanine + NH4(+) + ATP = 7-cyano-7-deazaguanine + ADP + phosphate + H2O + H(+). Its pathway is purine metabolism; 7-cyano-7-deazaguanine biosynthesis. In terms of biological role, catalyzes the ATP-dependent conversion of 7-carboxy-7-deazaguanine (CDG) to 7-cyano-7-deazaguanine (preQ(0)). In Hahella chejuensis (strain KCTC 2396), this protein is 7-cyano-7-deazaguanine synthase.